The chain runs to 349 residues: Protein-glutamate methylesterase/protein-glutamine glutaminase (349 aa).

The Response regulatory domain occupies 5–122 (RVLSVDDSAL…REGMLAYSEM (118 aa)). At Asp56 the chain carries 4-aspartylphosphate. In terms of domain architecture, CheB-type methylesterase spans 152 to 344 (LLSSEKLIAI…QQMLAKISAG (193 aa)). Catalysis depends on residues Ser164, His190, and Asp286.

Belongs to the CheB family. Phosphorylated by CheA. Phosphorylation of the N-terminal regulatory domain activates the methylesterase activity.

It is found in the cytoplasm. The catalysed reaction is [protein]-L-glutamate 5-O-methyl ester + H2O = L-glutamyl-[protein] + methanol + H(+). It carries out the reaction L-glutaminyl-[protein] + H2O = L-glutamyl-[protein] + NH4(+). Its function is as follows. Involved in chemotaxis. Part of a chemotaxis signal transduction system that modulates chemotaxis in response to various stimuli. Catalyzes the demethylation of specific methylglutamate residues introduced into the chemoreceptors (methyl-accepting chemotaxis proteins or MCP) by CheR. Also mediates the irreversible deamidation of specific glutamine residues to glutamic acid. The polypeptide is Protein-glutamate methylesterase/protein-glutamine glutaminase (Escherichia coli O157:H7).